The following is a 236-amino-acid chain: CDP-diacylglycerol--glycerol-3-phosphate 3-phosphatidyltransferase (236 aa).

The next 5 membrane-spanning stretches (helical) occupy residues 39 to 59 (IFIALPTIIFIALDNQLGVLA), 66 to 86 (ISISLQISLLIGGFLFLTAVI), 120 to 140 (VLIALAINGYFHFSLLIVFIV), 163 to 183 (WLGKWKTIMQMVGIVFSCFVW), and 196 to 216 (GLFFWLLTQLPYYLAAVFSIW).

It belongs to the CDP-alcohol phosphatidyltransferase class-I family.

Its subcellular location is the cell membrane. The enzyme catalyses a CDP-1,2-diacyl-sn-glycerol + sn-glycerol 3-phosphate = a 1,2-diacyl-sn-glycero-3-phospho-(1'-sn-glycero-3'-phosphate) + CMP + H(+). It participates in phospholipid metabolism; phosphatidylglycerol biosynthesis; phosphatidylglycerol from CDP-diacylglycerol: step 1/2. In terms of biological role, this protein catalyzes the committed step to the synthesis of the acidic phospholipids. This chain is CDP-diacylglycerol--glycerol-3-phosphate 3-phosphatidyltransferase (pgsA), found in Mycoplasma genitalium (strain ATCC 33530 / DSM 19775 / NCTC 10195 / G37) (Mycoplasmoides genitalium).